The chain runs to 239 residues: N-glycosylase/DNA lyase (239 aa).

The 8-oxoguanine site is built by glutamine 24, serine 51, and tryptophan 62. Positions glutamate 118–arginine 182 are helix-hairpin-helix. The Schiff-base intermediate with DNA role is filled by lysine 142. The 8-oxoguanine site is built by phenylalanine 146 and proline 172. Aspartate 174 is a catalytic residue. 8-oxoguanine contacts are provided by aspartate 208 and tryptophan 212.

Belongs to the archaeal N-glycosylase/DNA lyase (AGOG) family.

The enzyme catalyses 2'-deoxyribonucleotide-(2'-deoxyribose 5'-phosphate)-2'-deoxyribonucleotide-DNA = a 3'-end 2'-deoxyribonucleotide-(2,3-dehydro-2,3-deoxyribose 5'-phosphate)-DNA + a 5'-end 5'-phospho-2'-deoxyribonucleoside-DNA + H(+). Its function is as follows. DNA repair enzyme that is part of the base excision repair (BER) pathway; protects from oxidative damage by removing the major product of DNA oxidation, 8-oxoguanine (GO), from single- and double-stranded DNA substrates. In Pyrococcus horikoshii (strain ATCC 700860 / DSM 12428 / JCM 9974 / NBRC 100139 / OT-3), this protein is N-glycosylase/DNA lyase.